The chain runs to 726 residues: Beta-adducin (726 aa).

A disordered region spans residues 1 to 25 (MSEETVPEAASPPPPQGQPYFDRFS). Residues Ser-11 and Ser-25 each carry the phosphoserine modification. At Thr-55 the chain carries Phosphothreonine; by PKA. A phosphoserine mark is found at Ser-60 and Ser-344. The tract at residues 425–444 (KQQKEKTRWLNTPNTYLRVN) is interaction with calmodulin. The segment at 525–726 (AEKSRSPSTE…KSKKKEKVES (202 aa)) is disordered. Residues Ser-530 and Ser-532 each carry the phosphoserine modification. A Phosphothreonine modification is found at Thr-533. Ser-535 is modified (phosphoserine). The segment covering 566–586 (EEYKKEVERKKLELDGEKETA) has biased composition (basic and acidic residues). The span at 588 to 606 (EEPGSPAKSAPASPVQSPA) shows a compositional bias: low complexity. 4 positions are modified to phosphoserine: Ser-592, Ser-596, Ser-600, and Ser-604. Thr-611 carries the post-translational modification Phosphothreonine. Phosphoserine is present on residues Ser-613, Ser-617, Ser-619, and Ser-621. The span at 621-631 (SLEEGTKKTET) shows a compositional bias: basic and acidic residues. Low complexity predominate over residues 632-645 (SKAATTEPETTQPE). The segment covering 665–674 (GLSQMTTSAD) has biased composition (polar residues). The residue at position 675 (Thr-675) is a Phosphothreonine. Phosphoserine occurs at positions 686, 689, 693, 697, 699, and 701. The span at 689-701 (SGPMSPEGSPSKS) shows a compositional bias: low complexity. Positions 702–726 (PSKKKKKFRTPSFLKKSKKKEKVES) are enriched in basic residues. Ser-703 is modified (phosphoserine; by PKC). The interval 704–721 (KKKKKFRTPSFLKKSKKK) is interaction with calmodulin. Phosphoserine; by PKA and PKC is present on Ser-713.

It belongs to the aldolase class II family. Adducin subfamily. Heterodimer of an alpha and a beta subunit. Found in a complex with ADD2, DMTN and SLC2A1. Interacts with SLC2A1. In terms of processing, the N-terminus is blocked. As to expression, expressed mainly in brain, spleen, kidney cortex and medulla, and heart. Also expressed in human umbilical vein endothelial cells, human vascular smooth muscle cells, kidney tubular cells and K-562 cell line.

Its subcellular location is the cytoplasm. It localises to the cytoskeleton. The protein resides in the cell membrane. Its function is as follows. Membrane-cytoskeleton-associated protein that promotes the assembly of the spectrin-actin network. Binds to the erythrocyte membrane receptor SLC2A1/GLUT1 and may therefore provide a link between the spectrin cytoskeleton to the plasma membrane. Binds to calmodulin. Calmodulin binds preferentially to the beta subunit. The sequence is that of Beta-adducin (ADD2) from Homo sapiens (Human).